The following is a 692-amino-acid chain: MPRTHKIEDYRNFGIMAHIDAGKTTTTERILYYTGKSHKIGEVHDGAATMDWMEQEQERGITITSAATTAFWNDKRLNIIDTPGHVDFTIEVERSLRVLDGAVTVLDGNAGVEPQTETVWRQADKYKVPRIVFVNKMDKIGADFDKSVESIRDRLGAKAVPIQFPIGSESNLKGLVDLVRMKAVVWDNDGLGASYRDEEIPADLMDKAVEARAYLVENAVELDDDAMEAYLGGEEPSIETIKKCIRKAVLTGAFYPILCGSAFKNKGVQPLLDAVVDYLPSPVDIPPTKGIDFKTEEETTRKASDEEPLSVLAFKIMDDPFVGSLTFCRIYSGKMETGMSLLNSTRDKRERVGRMLLMHSNNREDIKEAYAGDIVALAGLKETRTGDTLCDPLKSPVILERMEFPAPVIEIAVEPKSKADQEKLGVALQKLAAEDPSFTVSTDFESGQTILKGMGELHLDIKIDILKRTYKVEANIGAPQVAYRESLGRKVDIDYTHKKQTGGTGQFARVMITFEPGEPGSGFVFESAIVGGAVPKEYIPGVQKGLESVKDSGLLAGFPLIDFKATLTDGKYHDVDSSVLAFEIASRAAFKELREKGAPKLLEPIMKVEVVTPEEYLGSVIGDLNSRRGMIQGQDMRGNATVVNAYVPLANMFGYVNTLRGMSQGRAQFSMVYDHYDPVPQHVADEVIKKYA.

One can recognise a tr-type G domain in the interval 8–283; the sequence is EDYRNFGIMA…AVVDYLPSPV (276 aa). GTP-binding positions include 17-24, 81-85, and 135-138; these read AHIDAGKT, DTPGH, and NKMD.

It belongs to the TRAFAC class translation factor GTPase superfamily. Classic translation factor GTPase family. EF-G/EF-2 subfamily.

It is found in the cytoplasm. Catalyzes the GTP-dependent ribosomal translocation step during translation elongation. During this step, the ribosome changes from the pre-translocational (PRE) to the post-translocational (POST) state as the newly formed A-site-bound peptidyl-tRNA and P-site-bound deacylated tRNA move to the P and E sites, respectively. Catalyzes the coordinated movement of the two tRNA molecules, the mRNA and conformational changes in the ribosome. In Caulobacter vibrioides (strain ATCC 19089 / CIP 103742 / CB 15) (Caulobacter crescentus), this protein is Elongation factor G.